The primary structure comprises 184 residues: Large ribosomal subunit protein uL6 (184 aa).

Belongs to the universal ribosomal protein uL6 family. As to quaternary structure, part of the 50S ribosomal subunit.

Functionally, this protein binds to the 23S rRNA, and is important in its secondary structure. It is located near the subunit interface in the base of the L7/L12 stalk, and near the tRNA binding site of the peptidyltransferase center. This Thermococcus kodakarensis (strain ATCC BAA-918 / JCM 12380 / KOD1) (Pyrococcus kodakaraensis (strain KOD1)) protein is Large ribosomal subunit protein uL6.